We begin with the raw amino-acid sequence, 356 residues long: UDP-N-acetylglucosamine--N-acetylmuramyl-(pentapeptide) pyrophosphoryl-undecaprenol N-acetylglucosamine transferase (356 aa).

Residues 15–17, N127, R163, S191, I244, 263–268, and Q288 contribute to the UDP-N-acetyl-alpha-D-glucosamine site; these read TGG and ALTVSE.

Belongs to the glycosyltransferase 28 family. MurG subfamily.

It localises to the cell inner membrane. The catalysed reaction is di-trans,octa-cis-undecaprenyl diphospho-N-acetyl-alpha-D-muramoyl-L-alanyl-D-glutamyl-meso-2,6-diaminopimeloyl-D-alanyl-D-alanine + UDP-N-acetyl-alpha-D-glucosamine = di-trans,octa-cis-undecaprenyl diphospho-[N-acetyl-alpha-D-glucosaminyl-(1-&gt;4)]-N-acetyl-alpha-D-muramoyl-L-alanyl-D-glutamyl-meso-2,6-diaminopimeloyl-D-alanyl-D-alanine + UDP + H(+). Its pathway is cell wall biogenesis; peptidoglycan biosynthesis. Cell wall formation. Catalyzes the transfer of a GlcNAc subunit on undecaprenyl-pyrophosphoryl-MurNAc-pentapeptide (lipid intermediate I) to form undecaprenyl-pyrophosphoryl-MurNAc-(pentapeptide)GlcNAc (lipid intermediate II). This is UDP-N-acetylglucosamine--N-acetylmuramyl-(pentapeptide) pyrophosphoryl-undecaprenol N-acetylglucosamine transferase from Yersinia pestis bv. Antiqua (strain Antiqua).